The following is a 148-amino-acid chain: Cytochrome c-type biogenesis protein CcmE (148 aa).

Residues 1 to 7 lie on the Cytoplasmic side of the membrane; the sequence is MKPRNRR. A helical; Signal-anchor for type II membrane protein membrane pass occupies residues 8-28; it reads IALIVAGLSALGIATALVLNA. Topologically, residues 29–148 are periplasmic; it reads FQSNLVFFFT…VQKKPASRKP (120 aa). 2 residues coordinate heme: H123 and Y127. The disordered stretch occupies residues 128–148; it reads MPPEAQHALDEVQKKPASRKP.

Belongs to the CcmE/CycJ family.

The protein localises to the cell inner membrane. Heme chaperone required for the biogenesis of c-type cytochromes. Transiently binds heme delivered by CcmC and transfers the heme to apo-cytochromes in a process facilitated by CcmF and CcmH. This is Cytochrome c-type biogenesis protein CcmE from Pseudomonas aeruginosa.